A 444-amino-acid chain; its full sequence is Jacalin-related lectin 11 (444 aa).

Residue Ala2 is modified to N-acetylalanine. Jacalin-type lectin domains are found at residues 2-143 (ALKV…YFIK), 146-290 (SIQS…YYAP), and 298-442 (PEKL…HVTA).

The protein belongs to the jacalin lectin family.

The protein is Jacalin-related lectin 11 (JAL11) of Arabidopsis thaliana (Mouse-ear cress).